We begin with the raw amino-acid sequence, 760 residues long: Ferric/cupric reductase transmembrane component 1 (760 aa).

The first 18 residues, M1–A18, serve as a signal peptide directing secretion. Residues R19–Y212 lie on the Extracellular side of the membrane. Residues N78, N91, N111, N143, N155, and N207 are each glycosylated (N-linked (GlcNAc...) asparagine). Residues T119 to T177 are disordered. A helical transmembrane segment spans residues G213–I233. The Cytoplasmic portion of the chain corresponds to K234–T288. A helical membrane pass occupies residues I289 to V309. Over K310–H324 the chain is Extracellular. A helical transmembrane segment spans residues L325–G345. The 116-residue stretch at T330–V445 folds into the Ferric oxidoreductase domain. The Cytoplasmic portion of the chain corresponds to G346–R371. Heme is bound by residues H366 and H380. Residues V372–G392 traverse the membrane as a helical segment. At K393 to M403 the chain is on the extracellular side. The chain crosses the membrane as a helical span at residues I404–F424. Over R425–E430 the chain is Cytoplasmic. A helical transmembrane segment spans residues V431–L451. The heme site is built by H436 and H450. Residues E452–A760 are Extracellular-facing. The FAD-binding FR-type domain occupies A465–A583. Residue G575–G578 participates in NADP(+) binding. Residue N615 is glycosylated (N-linked (GlcNAc...) asparagine). C726–G727 provides a ligand contact to NADP(+). N744 carries N-linked (GlcNAc...) asparagine glycosylation.

This sequence belongs to the ferric reductase (FRE) family. FAD is required as a cofactor. The cofactor is heme.

Its subcellular location is the cell membrane. The enzyme catalyses 2 a Fe(II)-siderophore + NADP(+) + H(+) = 2 a Fe(III)-siderophore + NADPH. Ferric reductase responsible for reducing extracellular iron and copper prior to import. Catalyzes the reductive uptake of Fe(3+)-salts and Fe(3+) bound to catecholate or hydroxamate siderophores. Fe(3+) is reduced to Fe(2+), which then dissociates from the siderophore and can be imported by the high-affinity Fe(2+) transport complex in the plasma membrane. Also participates in Cu(2+) reduction and Cu(+) uptake. Involved in maintenance of cell wall integrity (CWI), mitochondrial function, and interaction between the pathogen and the host. This Candida albicans (strain SC5314 / ATCC MYA-2876) (Yeast) protein is Ferric/cupric reductase transmembrane component 1.